Consider the following 152-residue polypeptide: TRAPP-associated protein TCA17 (152 aa).

It belongs to the TRAPP small subunits family. Sedlin subfamily. In terms of assembly, interacts with the TRAPP II complex; TRAPP II subunits TRS33 and TRS65 are required for this interaction.

Its subcellular location is the golgi apparatus. It localises to the trans-Golgi network. Required, together with the TRAPP II subunit TRS33, for TRAPP II complex assembly or stability, and for proper Golgi localization of TRAPP and the Rab GTPase YPT31. This Saccharomyces cerevisiae (strain ATCC 204508 / S288c) (Baker's yeast) protein is TRAPP-associated protein TCA17 (TCA17).